A 270-amino-acid polypeptide reads, in one-letter code: MSTPTSNIPDVQNSADTRHIAINKVGIKSIRHPIKVQDKSAGIQHTIAMFNMYVGLPHNFKGTHMSRFVEILNSHEREISVENFPTMLRDMVVKLEAETGHIEMNFPYFINKTAPVSGVQSLMDYDVTFIGDICHGEIATSVKVVVPVTSLCPCSKKISEYGAHNQRSHVTVTAKTNDFMWIEEIVQLVEQEASCELFGLLKRPDEKYVTERAYDNPKFVEDMVRDVAARLNAEARVDAYVVESENFESIHNHSAYALIENDKKNPLAHA.

The protein belongs to the GTP cyclohydrolase IV family.

The catalysed reaction is GTP + H2O = 7,8-dihydroneopterin 3'-triphosphate + formate + H(+). The protein operates within cofactor biosynthesis; 7,8-dihydroneopterin triphosphate biosynthesis; 7,8-dihydroneopterin triphosphate from GTP: step 1/1. Its function is as follows. Converts GTP to 7,8-dihydroneopterin triphosphate. The protein is GTP cyclohydrolase FolE2 2 of Dechloromonas aromatica (strain RCB).